The sequence spans 299 residues: ATP synthase gamma chain (299 aa).

Belongs to the ATPase gamma chain family. F-type ATPases have 2 components, CF(1) - the catalytic core - and CF(0) - the membrane proton channel. CF(1) has five subunits: alpha(3), beta(3), gamma(1), delta(1), epsilon(1). CF(0) has three main subunits: a, b and c.

The protein resides in the cell membrane. Produces ATP from ADP in the presence of a proton gradient across the membrane. The gamma chain is believed to be important in regulating ATPase activity and the flow of protons through the CF(0) complex. The protein is ATP synthase gamma chain of Clavibacter sepedonicus (Clavibacter michiganensis subsp. sepedonicus).